Here is a 33-residue protein sequence, read N- to C-terminus: Cysteine-rich venom protein (33 aa).

The disordered stretch occupies residues 1–33; sequence NVDFNSESTRRKKKQKEIVDLHNSLRRRVSPTA. Over residues 24 to 33 the composition is skewed to basic residues; sequence SLRRRVSPTA.

This sequence belongs to the CRISP family. In terms of processing, contains 8 disulfide bonds. Expressed by the venom gland.

It localises to the secreted. Its function is as follows. Blocks contraction of smooth muscle elicited by high potassium-induced depolarization, but does not block caffeine-stimulated contraction. May target voltage-gated calcium channels on smooth muscle (Cav). In Naja naja (Indian cobra), this protein is Cysteine-rich venom protein.